The primary structure comprises 142 residues: Small heat shock protein IbpB (142 aa).

In terms of domain architecture, sHSP spans 26–137; sequence TGESQSFPPY…APQRIAISER (112 aa).

This sequence belongs to the small heat shock protein (HSP20) family. As to quaternary structure, homodimer. Forms homomultimers of about 100-150 subunits at optimal growth temperatures. Conformation changes to oligomers at high temperatures or high ionic concentrations. The decrease in size of the multimers is accompanied by an increase in chaperone activity.

It is found in the cytoplasm. Functionally, associates with aggregated proteins, together with IbpA, to stabilize and protect them from irreversible denaturation and extensive proteolysis during heat shock and oxidative stress. Aggregated proteins bound to the IbpAB complex are more efficiently refolded and reactivated by the ATP-dependent chaperone systems ClpB and DnaK/DnaJ/GrpE. Its activity is ATP-independent. The polypeptide is Small heat shock protein IbpB (Citrobacter koseri (strain ATCC BAA-895 / CDC 4225-83 / SGSC4696)).